The sequence spans 197 residues: Cerebellin-3 (197 aa).

The N-terminal stretch at 1 to 24 (MGTEWHKPKLSLALVLLTLEAGWA) is a signal peptide. The region spanning 59 to 197 (APPGRVAFAA…SFSGFLIFPL (139 aa)) is the C1q domain. A necessary for interaction with CBLN3, and homotrimerization region spans residues 64–197 (VAFAAVRSHH…SFSGFLIFPL (134 aa)). N82 carries N-linked (GlcNAc...) asparagine glycosylation.

As to quaternary structure, heterohexamer; disulfide-linked heterotrimers. Interacts with CBLN1. May also form oligomers with CBLN2 and CBLN4. As to expression, expressed in brain, restricted to the cerebellar cortex. Within the cerebellum, expressed in granule layers (at protein level). Also detected in postsynaptic Purkinje cell spines (at protein level).

The protein resides in the endoplasmic reticulum. The protein localises to the golgi apparatus. It localises to the cis-Golgi network. Its subcellular location is the secreted. It is found in the synapse. Functionally, may be involved in synaptic functions in the CNS. The protein is Cerebellin-3 (Cbln3) of Mus musculus (Mouse).